The following is a 70-amino-acid chain: Conotoxin elongated-tx3a-a (70 aa).

Positions 1–24 (MLKMGVVLFIFLVLFPLATLQLDA) are cleaved as a signal peptide. The propeptide occupies 25–44 (DQPVERYAENKQLLSPDERR). 3 disulfide bridges follow: C55–C68, C56–C66, and C61–C69. W58 carries the post-translational modification 6'-bromotryptophan; partial. The residue at position 69 (C69) is a Cysteine amide; partial.

This sequence belongs to the conotoxin M superfamily. Post-translationally, two short peptides are produced from this precursor; Conotoxin tx3a-b is amidated at Cys-69 (but has no bromotryptophan), whereas conotoxin tx3a-a has an unmodified Gly-70 and a bromotryptophan. Two elongated peptides are also produced; Conotoxin elongated-tx3a-b is amidated at Cys-69 (but has no bromotryptophan), whereas conotoxin elongated tx3a-a has an unmodified Gly-70 (but has no bromotryptophan). In terms of processing, ju et al. (2022) describe a disulfide connectivity (C55-C61; C56-C69; C66-C68) that differs from that of Han and colleagues (2006), McDougal et al. (2008), and Ueberheide et al. (2009). In terms of tissue distribution, expressed by the venom duct. Is present in all duct parts with a highest content in part 2 (proximal of the venom bulb) and then decreases in concentration toward the end of the duct.

It is found in the secreted. In terms of biological role, intracranial injection into mice causes scratching and hyperactivity. In vitro, inhibits proliferation of the mice ovarian cancer cells ID8. The protein is Conotoxin elongated-tx3a-a of Conus textile (Cloth-of-gold cone).